Reading from the N-terminus, the 110-residue chain is Acylphosphatase (110 aa).

Residues 21-108 (TRRYLVTGRV…TNLKSFRIEG (88 aa)) enclose the Acylphosphatase-like domain. Residues Arg-36 and Asn-54 contribute to the active site.

It belongs to the acylphosphatase family.

The enzyme catalyses an acyl phosphate + H2O = a carboxylate + phosphate + H(+). This is Acylphosphatase (acyP) from Koribacter versatilis (strain Ellin345).